The primary structure comprises 515 residues: Germ cell-less protein-like 1 (515 aa).

The tract at residues 1 to 35 (MGSLSSRVLRQPRPALAQQAQGARAGGSARRPDTG) is disordered. Residues 11–29 (QPRPALAQQAQGARAGGSA) are compositionally biased toward low complexity. Positions 49–55 (SHKRKRS) match the Nuclear localization signal motif. Residues 65-85 (DSETDEDEEEGDEQQRLLNTP) are disordered. The residue at position 66 (serine 66) is a Phosphoserine. Acidic residues predominate over residues 67 to 76 (ETDEDEEEGD). Threonine 68 carries the post-translational modification Phosphothreonine. The Nuclear localization signal motif lies at 85-91 (PRRKKLK). The region spanning 108 to 178 (SDIKICALGE…LYRDDVLIKP (71 aa)) is the BTB domain.

Interacts with TMPO-beta, TSG101 and TFDP2. Interacts with EMD.

It localises to the nucleus matrix. Functionally, possible function in spermatogenesis. Enhances the degradation of MDM2 and increases the amount of p53 probably by modulating the nucleocytoplasmic transport. In Homo sapiens (Human), this protein is Germ cell-less protein-like 1 (GMCL1).